The following is a 775-amino-acid chain: WD repeat-containing protein pop1 (775 aa).

The F-box domain occupies 298–345 (KNFLTGFPAEITNLVLTHLDAPSLCAVSQVSHHWYKLVSSNEELWKSL). 5 WD repeats span residues 444-472 (EHEG…RVWD), 484-538 (GHTS…RLWS), 575-603 (GHTD…RVWK), 615-645 (GHVG…RIWN), and 657-687 (GHSN…RVWD).

In terms of assembly, homodimer and heterodimer with pop2. Binds to cdc18, phosphorylated cig2, cul1, pip1 and skp1.

Its subcellular location is the nucleus. In terms of biological role, involved in maintenance of ploidy through proteasome dependent degradation of CDK inhibitor rum1 and S-phase initiator cdc18. Functions as a recognition factor for rum1 and cdc18, which are subsequently ubiquitinated and targeted to the 26S proteasome for degradation. Together with pop2, required for cig2 instability during G2 and M phase and cig2 degradation in exponentially growing cells. Regulates cell-cycle progression under starvation through the rum1 protein. The protein is WD repeat-containing protein pop1 (pop1) of Schizosaccharomyces pombe (strain 972 / ATCC 24843) (Fission yeast).